The primary structure comprises 386 residues: Protein salvador homolog 1 (386 aa).

S95 and S137 each carry phosphoserine. 2 consecutive WW domains span residues 200-233 and 235-268; these read LPLPPGWSVDWTMRGRKYYIDHNTNTTHWSHPLE and EGLPPGWERVESSEFGTYYVDHTNKRAQYRHPCA. A Phosphothreonine modification is found at T211. In terms of domain architecture, SARAH spans 322-369; it reads ILKWELFQLADLDTYQGMLKLLFMKELEQIVKLYEAYRQALLTELENR. Residues 345–374 are a coiled coil; sequence MKELEQIVKLYEAYRQALLTELENRKQRQQ.

Homodimer. Stabilized through interaction with STK3/MST2 or STK4/MST1. Interacts (via SARAH domain) with isoform 1 of NEK2. Interacts with ESR1 only in the presence of STK3/MST2. Interacts with WTIP and AJUBA. Phosphorylated by STK3/MST2 and STK4/MST1. Phosphorylation is not required for SAV1 stability and may increase the number of protein binding sites on the scaffold molecule. As to expression, ubiquitously expressed in adult tissues with the highest level found in testis.

The protein localises to the nucleus. Its subcellular location is the cytoplasm. Functionally, regulator of STK3/MST2 and STK4/MST1 in the Hippo signaling pathway which plays a pivotal role in organ size control and tumor suppression by restricting proliferation and promoting apoptosis. The core of this pathway is composed of a kinase cascade wherein STK3/MST2 and STK4/MST1, in complex with its regulatory protein SAV1, phosphorylates and activates LATS1/2 in complex with its regulatory protein MOB1, which in turn phosphorylates and inactivates YAP1 oncoprotein and WWTR1/TAZ. Phosphorylation of YAP1 by LATS1/2 inhibits its translocation into the nucleus to regulate cellular genes important for cell proliferation, cell death, and cell migration. SAV1 is required for STK3/MST2 and STK4/MST1 activation and promotes cell-cycle exit and terminal differentiation in developing epithelial tissues. Plays a role in centrosome disjunction by regulating the localization of NEK2 to centrosomes, and its ability to phosphorylate CROCC and CEP250. In conjunction with STK3/MST2, activates the transcriptional activity of ESR1 through the modulation of its phosphorylation. The sequence is that of Protein salvador homolog 1 (Sav1) from Mus musculus (Mouse).